The following is a 165-amino-acid chain: MLSENVVKLLNDQMNLEFYSSNLYLQMSAWCDQQGFEGTAKFLSVHAAEEMQHMRKLFTYLNETGSLAVISAIEAPAHEYKSLKEVIETTYEHEKLITSKINELVGKTFEEKDYSAFNFLQWYVEEQHEEEKLFSSILDKLNFLGEDGKGLFLIDKDLGNLSTKA.

One can recognise a Ferritin-like diiron domain in the interval 1–145 (MLSENVVKLL…SILDKLNFLG (145 aa)). Fe cation is bound by residues glutamate 17, glutamate 50, histidine 53, glutamate 94, and glutamine 127.

It belongs to the ferritin family. Prokaryotic subfamily.

It localises to the cytoplasm. This chain is Probable bacterial non-heme ferritin-like protein (ftnB), found in Haemophilus influenzae (strain ATCC 51907 / DSM 11121 / KW20 / Rd).